A 541-amino-acid chain; its full sequence is T-complex protein 1 subunit epsilon (541 aa).

Residue alanine 2 is modified to N-acetylalanine. Residue lysine 20 forms a Glycyl lysine isopeptide (Lys-Gly) (interchain with G-Cter in SUMO2) linkage. Serine 26 is modified (phosphoserine). Glycine 53 is a binding site for ADP. Residue glycine 53 participates in ATP binding. Position 104 (aspartate 104) interacts with Mg(2+). ADP contacts are provided by glycine 105, threonine 106, threonine 107, and serine 175. The ATP site is built by threonine 106 and threonine 107. Residues lysine 210, lysine 214, lysine 265, lysine 275, and lysine 279 each participate in a glycyl lysine isopeptide (Lys-Gly) (interchain with G-Cter in SUMO2) cross-link. Serine 346 carries the phosphoserine modification. Residue lysine 392 forms a Glycyl lysine isopeptide (Lys-Gly) (interchain with G-Cter in SUMO2) linkage. Residues glycine 422, aspartate 492, glutamate 508, and lysine 513 each coordinate ADP. Residue glycine 422 participates in ATP binding. Serine 539 bears the Phosphoserine mark.

The protein belongs to the TCP-1 chaperonin family. As to quaternary structure, component of the chaperonin-containing T-complex (TRiC), a hexadecamer composed of two identical back-to-back stacked rings enclosing a protein folding chamber. Each ring is made up of eight different subunits: TCP1/CCT1, CCT2, CCT3, CCT4, CCT5, CCT6A/CCT6, CCT7, CCT8. Interacts with PACRG. Interacts with DNAAF4. Interacts with DLEC1. Interacts with SPMAP2. Ubiquitinated by the DCX(DCAF12) complex specifically recognizes the diglutamate (Glu-Glu) at the C-terminus, leading to its degradation.

The protein localises to the cytoplasm. It is found in the cytoskeleton. The protein resides in the microtubule organizing center. It localises to the centrosome. The catalysed reaction is ATP + H2O = ADP + phosphate + H(+). Functionally, component of the chaperonin-containing T-complex (TRiC), a molecular chaperone complex that assists the folding of actin, tubulin and other proteins upon ATP hydrolysis. The TRiC complex mediates the folding of WRAP53/TCAB1, thereby regulating telomere maintenance. As part of the TRiC complex may play a role in the assembly of BBSome, a complex involved in ciliogenesis regulating transports vesicles to the cilia. The chain is T-complex protein 1 subunit epsilon (CCT5) from Homo sapiens (Human).